A 515-amino-acid chain; its full sequence is GMP synthase [glutamine-hydrolyzing] (515 aa).

The 191-residue stretch at 10-200 folds into the Glutamine amidotransferase type-1 domain; sequence TIIVLDFGSQ…VFGVCGCSEG (191 aa). Cys87 functions as the Nucleophile in the catalytic mechanism. Active-site residues include His174 and Glu176. The region spanning 201–390 is the GMPS ATP-PPase domain; the sequence is WNMENFIEVE…LGIPDEIVWR (190 aa). Residue 228-234 coordinates ATP; the sequence is SGGVDSS.

Homodimer.

The enzyme catalyses XMP + L-glutamine + ATP + H2O = GMP + L-glutamate + AMP + diphosphate + 2 H(+). The protein operates within purine metabolism; GMP biosynthesis; GMP from XMP (L-Gln route): step 1/1. In terms of biological role, catalyzes the synthesis of GMP from XMP. The sequence is that of GMP synthase [glutamine-hydrolyzing] from Bacillus cereus (strain ATCC 14579 / DSM 31 / CCUG 7414 / JCM 2152 / NBRC 15305 / NCIMB 9373 / NCTC 2599 / NRRL B-3711).